A 235-amino-acid chain; its full sequence is 7-cyano-7-deazaguanine synthase (235 aa).

Residue 9–19 (FSGGQDSTTCL) participates in ATP binding. 4 residues coordinate Zn(2+): Cys197, Cys212, Cys215, and Cys218.

Belongs to the QueC family. Requires Zn(2+) as cofactor.

It carries out the reaction 7-carboxy-7-deazaguanine + NH4(+) + ATP = 7-cyano-7-deazaguanine + ADP + phosphate + H2O + H(+). Its pathway is purine metabolism; 7-cyano-7-deazaguanine biosynthesis. Functionally, catalyzes the ATP-dependent conversion of 7-carboxy-7-deazaguanine (CDG) to 7-cyano-7-deazaguanine (preQ(0)). This is 7-cyano-7-deazaguanine synthase from Polaromonas sp. (strain JS666 / ATCC BAA-500).